We begin with the raw amino-acid sequence, 1029 residues long: MISIYGLVMALMMASVLASSSRFQRVPQSQSVVENESVKFECESTDSYSELHYDWLHNGHRIAYDKRVHQIGSNLHIEAVRRTEDVGNYVCIATNLASGAREASPPAKLSVIYLESASVQLLGSNRNELLLKCHVEGASGDLEPLEIEWYRNSEKLSTWKNVQLDQHRLIIRQPGSEDDGLYRCTASNAAGRVMSKQGYVYQSSVKCLPRLPRRKNQKMMESWDKQTFLCRGKRGGAAGLEALPAVPEDLRIVQGPIAQSIIKEGEPTALTCLYELPDELKNQRIQLRWRKDGKLLRQVELGGSAPILGHSFDSGKDALLREDARLVLHKQNGTLSFASIIASDAGQYQCQLQLEAHAPISSSPGILEVIEQLKFVPQPTSKNLELDAVVAKVHCKAQGTPTPQVQWIRDGENTTLPDQVEVDANGTLIFRNVNSEHRGNYTCLATNTQGQINATVAINVVVTPKFSVPPVGPIETSEQGTVVMHCQAIGDPKPTIQWDKDLKYLSENNTDRERFRFLENGTLEIRNVQVEDEGSYGCTIGNSAGLKREDVQLVVKTTGDGFAPEESGGDGFLVTRAVLITMTVALAYIVLVVGLMLWCRYRRQARKARLNDLSTKEAGGDQPDAAGNGKGSEQEPCLSKQHNGHSKSRSKSSGDAQKSDDTACSQQSRASKKSAHIYEQLALPRSGLSELIQIGRGEFGDVFVGKLKATLVTSPSDKDADTEKQHSNSENGSGGSGSGSTTLSTLNEKRRSKTSMDDIEEIKEEEQEQHNQSGLEQLVLVKALNKVKDEQACQEFRRQLDLLRAISHKGVVRLFGLCREKDPHYMVLEYTDWGDLKQFLLATAGKVNTATAGSSSPPPLTTSQVLAVAYQIARGMDAIYRARFTHRDLATRNCVISSEFIVKVSYPALCKDKYSREYHKHRNTLLPIRWLAPECIQEDEYTTKSDIFAYGVVVWELFNQATKLPHEELTNEQVVQRSQAGSLEWSVAEATPDSLREILLSCWVSNPKERPSFSQLGAALSKAMQSAEK.

Positions Met1–Ala18 are cleaved as a signal peptide. Topologically, residues Ser19–Ala577 are extracellular. Ig-like C2-type domains lie at Ser21–Ser110, Leu109–Ser195, Pro247–Ser361, Pro364–Asn459, and Pro464–Val554. Asn35 carries N-linked (GlcNAc...) asparagine glycosylation. Intrachain disulfides connect Cys42-Cys91, Cys133-Cys184, Cys272-Cys350, and Cys395-Cys443. N-linked (GlcNAc...) asparagine glycosylation is found at Asn332, Asn413, Asn425, Asn440, Asn453, Asn508, and Asn520. A disulfide bond links Cys486 and Cys538. Residues Val578–Trp598 form a helical membrane-spanning segment. The Cytoplasmic segment spans residues Cys599–Lys1029. Disordered regions lie at residues Leu613–Ala675 and Ser714–Met756. Positions Lys651–Arg669 are enriched in polar residues. Residue Ser674 is modified to Phosphoserine. Residues Leu688–Met1024 enclose the Protein kinase; inactive domain. A compositionally biased stretch (basic and acidic residues) spans Ser716–Ser727.

This sequence belongs to the protein kinase superfamily. Tyr protein kinase family. Insulin receptor subfamily. In terms of assembly, interacts with plexA; component of a receptor complex that mediates the repulsive signaling in response to Semaphorin ligands.

It localises to the cell membrane. Functionally, acts as a calcium-dependent, homophilic cell adhesion molecule that regulates neural recognition during the development of the nervous system. Component of the repulsive Plexin signaling response to regulate motor axon guidance at the embryonic stage. Also component of a receptor complex that is required in the adult visual system to innervate the lamina layer; specific targeting of R1-R6 axons. The polypeptide is Tyrosine-protein kinase-like otk (Drosophila simulans (Fruit fly)).